A 249-amino-acid chain; its full sequence is Segregation and condensation protein A (249 aa).

Belongs to the ScpA family. In terms of assembly, component of a cohesin-like complex composed of ScpA, ScpB and the Smc homodimer, in which ScpA and ScpB bind to the head domain of Smc. The presence of the three proteins is required for the association of the complex with DNA.

It is found in the cytoplasm. Functionally, participates in chromosomal partition during cell division. May act via the formation of a condensin-like complex containing Smc and ScpB that pull DNA away from mid-cell into both cell halves. The sequence is that of Segregation and condensation protein A from Oceanobacillus iheyensis (strain DSM 14371 / CIP 107618 / JCM 11309 / KCTC 3954 / HTE831).